We begin with the raw amino-acid sequence, 572 residues long: uncharacterized protein (572 aa).

The segment at Ala-13 to Val-45 is disordered. Residues Val-177 to Ala-204 adopt a coiled-coil conformation.

This is an uncharacterized protein from Dryophytes versicolor (chameleon treefrog).